Reading from the N-terminus, the 246-residue chain is Triosephosphate isomerase (246 aa).

9 to 11 (NWK) is a binding site for substrate. The active-site Electrophile is H99. E168 acts as the Proton acceptor in catalysis. Substrate contacts are provided by residues G174, S207, and 228–229 (GG).

The protein belongs to the triosephosphate isomerase family. As to quaternary structure, homodimer.

It is found in the cytoplasm. It carries out the reaction D-glyceraldehyde 3-phosphate = dihydroxyacetone phosphate. It functions in the pathway carbohydrate biosynthesis; gluconeogenesis. It participates in carbohydrate degradation; glycolysis; D-glyceraldehyde 3-phosphate from glycerone phosphate: step 1/1. Its function is as follows. Involved in the gluconeogenesis. Catalyzes stereospecifically the conversion of dihydroxyacetone phosphate (DHAP) to D-glyceraldehyde-3-phosphate (G3P). The chain is Triosephosphate isomerase from Prochlorococcus marinus (strain NATL1A).